The primary structure comprises 293 residues: Ankyrin repeat and SOCS box protein 11 (293 aa).

ANK repeat units lie at residues 36–65, 69–98, 102–131, 134–163, 167–196, 199–228, and 232–259; these read DDRTPLHDAALQGRLLPLRRLLSQGYNVGM, DGITALHEACVGGHFTCAKLLLEHGADANA, DGATPLFSACCSGNPALVSLILTHSSAHHP, LLCSPLHEAAKRGHTACVELLLSHGVNVDM, SVGTALYCACEVKSTDCVLTLLILGADVQC, GLDTPLHAACRVGGAKEAELLLEHGADRTS, and EGKTPLDLTSDQSIKHLLQTAGTCSLSQ. Positions 244–293 constitute an SOCS box domain; it reads SIKHLLQTAGTCSLSQLCRWCIRRSLGQKGLNKTKTLCLPHMLHNYLLYH.

Belongs to the ankyrin SOCS box (ASB) family. Substrate-recognition component of the ECS(ASB11) complex, composed of asb11, cul5, elob, eloc and rnf7/rbx2. In terms of tissue distribution, expressed in the developing nervous system: localizes to neural plate margins and is abutting the proneuronal zone.

It is found in the endoplasmic reticulum. The protein operates within protein modification; protein ubiquitination. Functionally, substrate-recognition component of a cullin-5-RING E3 ubiquitin-protein ligase complex (ECS complex, also named CRL5 complex), which mediates the ubiquitination and subsequent proteasomal degradation of target proteins. Acts as a regulator of the neuronal progenitor compartment size by maintaining the neural precursors in the proliferating undifferentiated state. The ECS(ASB11) complex acts as a positive regulator of Notch signaling pathway by mediating ubiquitination and degradation of DeltaA (dla). Also acts as a regulator of regenerative myogenesis. In Danio rerio (Zebrafish), this protein is Ankyrin repeat and SOCS box protein 11.